The primary structure comprises 947 residues: Bromodomain testis-specific protein (947 aa).

In terms of domain architecture, Bromo 1 spans 27 to 133 (RLTNQLQYLQ…KLFVQKLSQM (107 aa)). Ser187 bears the Phosphoserine mark. Positions 209–220 (KGVKRKADTTTP) match the Nuclear localization signal motif. In terms of domain architecture, Bromo 2 spans 267–376 (VKVTEQLRHC…DVFETHFSKI (110 aa)). Disordered stretches follow at residues 395–421 (ETTG…ERVQ), 444–512 (PFRK…PMNY), 610–690 (NNQL…VKKM), and 849–873 (HLEQ…GLTV). The segment covering 403–413 (NEASSEGNSSG) has biased composition (low complexity). The stretch at 417 to 470 (DERVQRLAKLQEQLKAVHQQLQVLSQVPFRKLNKKKEKSKKEKKKEKVNNSNEN) forms a coiled coil. Basic residues predominate over residues 447–462 (KLNKKKEKSKKEKKKE). Residues 470–481 (NPRKMCEQMRLK) show a composition bias toward basic and acidic residues. Over residues 482 to 494 (EKSKRNQPKKRKQ) the composition is skewed to basic residues. The NET domain occupies 500–582 (KSEDEDNAKP…ACLRKRPLKP (83 aa)). A compositionally biased stretch (low complexity) spans 631–668 (VGSVSRLSESSSSSSSSSESESSSSDLSSSDSSGSESE). Basic and acidic residues-rich tracts occupy residues 674–690 (TEVK…VKKM) and 849–865 (HLEQ…ENQR).

Belongs to the BET family. Interacts with SMARCE1. Interacts with mRNA splicing machinery proteins SRSF2, DDX5, HNRNPK and TARDBP. Interacts with the acetylated N-terminus of histone H1, H2, H3 and H4. Interacts with P-TEFb components CDK9 and CCNT1/cyclin-T1. Ubiquitinated in a SPOP-dependent manner, leading to proteasomal degradation.

The protein resides in the nucleus. Functionally, testis-specific chromatin protein that specifically binds histone H4 acetylated at 'Lys-5' and 'Lys-8' (H4K5ac and H4K8ac, respectively) and plays a key role in spermatogenesis. Required in late pachytene spermatocytes: plays a role in meiotic and post-meiotic cells by binding to acetylated histones at the promoter of specific meiotic and post-meiotic genes, facilitating their activation at the appropriate time. In the post-meiotic phase of spermatogenesis, binds to hyperacetylated histones and participates in their general removal from DNA. Also recognizes and binds a subset of butyrylated histones: able to bind histone H4 butyrylated at 'Lys-8' (H4K8ac), while it is not able to bind H4 butyrylated at 'Lys-5' (H4K5ac). Also acts as a component of the splicing machinery in pachytene spermatocytes and round spermatids and participates in 3'-UTR truncation of specific mRNAs in post-meiotic spermatids. Required for chromocenter organization, a structure comprised of peri-centromeric heterochromatin. The protein is Bromodomain testis-specific protein (BRDT) of Macaca fascicularis (Crab-eating macaque).